The sequence spans 458 residues: UDP-N-acetylmuramoylalanine--D-glutamate ligase (458 aa).

124-130 (GSDGKTT) contacts ATP.

The protein belongs to the MurCDEF family.

It localises to the cytoplasm. The catalysed reaction is UDP-N-acetyl-alpha-D-muramoyl-L-alanine + D-glutamate + ATP = UDP-N-acetyl-alpha-D-muramoyl-L-alanyl-D-glutamate + ADP + phosphate + H(+). The protein operates within cell wall biogenesis; peptidoglycan biosynthesis. Its function is as follows. Cell wall formation. Catalyzes the addition of glutamate to the nucleotide precursor UDP-N-acetylmuramoyl-L-alanine (UMA). The polypeptide is UDP-N-acetylmuramoylalanine--D-glutamate ligase (Clostridium botulinum (strain Kyoto / Type A2)).